A 341-amino-acid chain; its full sequence is 4-(gamma-L-glutamylamino)butanoyl-[BtrI acyl-carrier protein] monooxygenase BtrO (341 aa).

This sequence belongs to the bacterial luciferase oxidoreductase family.

It catalyses the reaction 4-(gamma-L-glutamylamino)butanoyl-[BtrI ACP] + FMNH2 + O2 = 4-(gamma-L-glutamylamino)-(2S)-2-hydroxybutanoyl-[BtrI ACP] + FMN + H2O + H(+). The protein operates within antibiotic biosynthesis; butirosin biosynthesis. Monooxygenase component of a two-component system involved in the biosynthesis of the side chain of the aminoglycoside antibiotics in the biosynthetic pathway of butirosin. Together with BtrV, mediates hydroxylation of gamma-L-Glu-GABA-S-BtrI. Not able to hydroxylate free substrates, activation by the acyl-carrier protein is mandatory. Octanoyl-S-[BtrI acyl-carrier protein] is also accepted as substrate. This is 4-(gamma-L-glutamylamino)butanoyl-[BtrI acyl-carrier protein] monooxygenase BtrO (btrO) from Niallia circulans (Bacillus circulans).